The following is a 177-amino-acid chain: Transcription termination/antitermination protein NusG (177 aa).

Positions 128 to 156 (ETVKVIDGPFANFTGSIEEIDYDKSKVKV) constitute a KOW domain.

This sequence belongs to the NusG family.

Its function is as follows. Participates in transcription elongation, termination and antitermination. Stimulates RNA polymerase pausing at U107 and U144 in the trp leader. NusG-stimulated pausing is sequence specific. Does not affect trp leader termination. The protein is Transcription termination/antitermination protein NusG of Bacillus subtilis (strain 168).